A 298-amino-acid chain; its full sequence is N-acetylmuramic acid 6-phosphate etherase (298 aa).

One can recognise an SIS domain in the interval 55-218 (IHAQVSGGGR…STGLMIKSGK (164 aa)). Catalysis depends on E83, which acts as the Proton donor. E114 is a catalytic residue.

This sequence belongs to the GCKR-like family. MurNAc-6-P etherase subfamily. In terms of assembly, homodimer.

The enzyme catalyses N-acetyl-D-muramate 6-phosphate + H2O = N-acetyl-D-glucosamine 6-phosphate + (R)-lactate. The protein operates within amino-sugar metabolism; 1,6-anhydro-N-acetylmuramate degradation. It participates in amino-sugar metabolism; N-acetylmuramate degradation. It functions in the pathway cell wall biogenesis; peptidoglycan recycling. In terms of biological role, specifically catalyzes the cleavage of the D-lactyl ether substituent of MurNAc 6-phosphate, producing GlcNAc 6-phosphate and D-lactate. Together with AnmK, is also required for the utilization of anhydro-N-acetylmuramic acid (anhMurNAc) either imported from the medium or derived from its own cell wall murein, and thus plays a role in cell wall recycling. The polypeptide is N-acetylmuramic acid 6-phosphate etherase (Escherichia coli O7:K1 (strain IAI39 / ExPEC)).